Consider the following 637-residue polypeptide: Probable ATP-binding protein YheS (637 aa).

2 consecutive ABC transporter domains span residues isoleucine 2 to glutamine 246 and leucine 313 to asparagine 527. ATP-binding positions include glycine 34–serine 41 and glycine 345–serine 352. The disordered stretch occupies residues glutamine 523–proline 559. A compositionally biased stretch (basic and acidic residues) spans alanine 542–leucine 553.

The protein belongs to the ABC transporter superfamily. ABCF family. YheS subfamily.

In terms of biological role, genetic data indicate it may be involved in ribosome assembly or function. The chain is Probable ATP-binding protein YheS (yheS) from Escherichia coli O157:H7.